A 672-amino-acid chain; its full sequence is SHC SH2 domain-binding protein 1 (672 aa).

An N-acetylalanine modification is found at Ala-2. Residue Ser-5 is modified to Phosphoserine. Thr-7 carries the phosphothreonine modification. Ser-31, Ser-42, Ser-44, Ser-47, and Ser-273 each carry phosphoserine. PbH1 repeat units follow at residues 428–451 (GADIKISGIKFVQHDAVEGILIVH), 452–473 (RGKTTLENCVLQCETTGVTVRT), 474–496 (SAEFLMKNSDLYGAKGAGIEIYP), 497–518 (GSQCTLSDNGIHHCKEGILIKD), and 526–548 (IPKISMVNNIIHNNEGYGVVLVK). At Ser-634 the chain carries Phosphoserine.

In terms of assembly, interacts directly with isoform p52shc of SHC1 via its SH2 domain. Interacts with TRIM71; leading to enhanced SHCBP1 protein stability. Interacts with both members of the centralspindlin complex, KIF23 and RACGAP1.

The protein resides in the midbody. It localises to the cytoplasm. Its subcellular location is the cytoskeleton. The protein localises to the spindle. Its function is as follows. May play a role in signaling pathways governing cellular proliferation, cell growth and differentiation. May be a component of a novel signaling pathway downstream of Shc. Acts as a positive regulator of FGF signaling in neural progenitor cells. The protein is SHC SH2 domain-binding protein 1 (SHCBP1) of Homo sapiens (Human).